Here is a 265-residue protein sequence, read N- to C-terminus: Phosphonates import ATP-binding protein PhnC 1 (265 aa).

One can recognise an ABC transporter domain in the interval 7–252 (IEVSNLSKSF…KLNEIYGTAA (246 aa)). Position 39-46 (39-46 (GASGSGKS)) interacts with ATP.

It belongs to the ABC transporter superfamily. Phosphonates importer (TC 3.A.1.9.1) family. The complex is composed of two ATP-binding proteins (PhnC), two transmembrane proteins (PhnE) and a solute-binding protein (PhnD).

It is found in the cell inner membrane. It catalyses the reaction phosphonate(out) + ATP + H2O = phosphonate(in) + ADP + phosphate + H(+). Functionally, part of the ABC transporter complex PhnCDE involved in phosphonates import. Responsible for energy coupling to the transport system. This Nostoc sp. (strain PCC 7120 / SAG 25.82 / UTEX 2576) protein is Phosphonates import ATP-binding protein PhnC 1.